A 275-amino-acid chain; its full sequence is Light-independent protochlorophyllide reductase iron-sulfur ATP-binding protein (275 aa).

Residues 12 to 17 (GIGKST) and Lys-41 each bind ATP. A Mg(2+)-binding site is contributed by Ser-16. 2 residues coordinate [4Fe-4S] cluster: Cys-97 and Cys-131. ATP is bound at residue 182–183 (NR).

This sequence belongs to the NifH/BchL/ChlL family. As to quaternary structure, homodimer. Protochlorophyllide reductase is composed of three subunits; BchL, BchN and BchB. [4Fe-4S] cluster serves as cofactor.

The enzyme catalyses chlorophyllide a + oxidized 2[4Fe-4S]-[ferredoxin] + 2 ADP + 2 phosphate = protochlorophyllide a + reduced 2[4Fe-4S]-[ferredoxin] + 2 ATP + 2 H2O. It participates in porphyrin-containing compound metabolism; bacteriochlorophyll biosynthesis (light-independent). Functionally, component of the dark-operative protochlorophyllide reductase (DPOR) that uses Mg-ATP and reduced ferredoxin to reduce ring D of protochlorophyllide (Pchlide) to form chlorophyllide a (Chlide). This reaction is light-independent. The L component serves as a unique electron donor to the NB-component of the complex, and binds Mg-ATP. In Chlorobium phaeovibrioides (strain DSM 265 / 1930) (Prosthecochloris vibrioformis (strain DSM 265)), this protein is Light-independent protochlorophyllide reductase iron-sulfur ATP-binding protein.